Here is a 72-residue protein sequence, read N- to C-terminus: Large ribosomal subunit protein uL29 (72 aa).

It belongs to the universal ribosomal protein uL29 family.

The sequence is that of Large ribosomal subunit protein uL29 from Caldicellulosiruptor bescii (strain ATCC BAA-1888 / DSM 6725 / KCTC 15123 / Z-1320) (Anaerocellum thermophilum).